The sequence spans 425 residues: Alpha/beta hydrolase xenA (425 aa).

Aspartate 366 is an active-site residue.

The protein belongs to the AB hydrolase superfamily. FUS2 hydrolase family. As to quaternary structure, homodimer.

It participates in mycotoxin biosynthesis. In terms of biological role, alpha/beta hydrolase; part of the gene cluster that mediates the biosynthesis of xenoacremones such as xenoacremone A, a compound that shows inhibitory activity toward the PI3K/AKT signaling pathway and which has the ability to induce apoptosis of A549 lung cancer cells. Within the pathway, cooperation of the hybrid PKS-NRPS xenE and the trans-acting enoyl reductase xenG is responsible for the formation of the reduced tyrosine-nonaketide derivative. The alpha/beta hydrolase xenA then accelerates intramolecular nucleophilic attack to give a pyrrolidone derivative. Subsequently, three enzymes, xenF, xenD, and xenC, coordinately participate in the conversion to xenoacremone B. XenF catalyzes sigmatropic rearrangement to form an A-ring, which leads to an unusual intermediate with a hexane ring, which is required for the formation of the tricarbocyclic product. Epoxidation catalyzed by xenD and the formation of the paracyclophane ether catalyzed by xenC initiate a spontaneous intramolecular Diels-Alder (IMDA) reaction to yield xenoacremone B. Spontaneous hydration of xenoacremone B leads to the formation of xenoacremone A, which undergoes subsequent methylation to afford xenoacremone C. In Xenoacremonium sinensis (Endophyte fungus), this protein is Alpha/beta hydrolase xenA.